The chain runs to 55 residues: MAKQQDVRPIIKLRSTAGTGYTYVTRKNRRNNPDRLVLKKYDPVVRKHVDFREER.

This sequence belongs to the bacterial ribosomal protein bL33 family.

This chain is Large ribosomal subunit protein bL33, found in Leifsonia xyli subsp. xyli (strain CTCB07).